We begin with the raw amino-acid sequence, 68 residues long: ATP synthase subunit K, mitochondrial (68 aa).

Residues 15 to 31 form a helical membrane-spanning segment; the sequence is HQLAIGTLGLLGLLVVP.

It belongs to the ATP19 family. F-type ATPases have 2 components, CF(1) - the catalytic core - and CF(0) - the membrane proton channel. In yeast, the dimeric form of ATP synthase consists of 17 polypeptides: alpha, beta, gamma, delta, epsilon, 4 (B), 5 (OSCP), 6 (A), 8, 9 (C), d, E (Tim11), f, g, h, i/j and k.

It is found in the mitochondrion inner membrane. Its function is as follows. Mitochondrial membrane ATP synthase (F(1)F(0) ATP synthase or Complex V) produces ATP from ADP in the presence of a proton gradient across the membrane which is generated by electron transport complexes of the respiratory chain. F-type ATPases consist of two structural domains, F(1) - containing the extramembraneous catalytic core and F(0) - containing the membrane proton channel, linked together by a central stalk and a peripheral stalk. During catalysis, ATP synthesis in the catalytic domain of F(1) is coupled via a rotary mechanism of the central stalk subunits to proton translocation. Part of the complex F(0) domain. Minor subunit located with subunit a in the membrane. The K chain binds the dimeric form by interacting with the G and E chains. The polypeptide is ATP synthase subunit K, mitochondrial (ATP19) (Saccharomyces cerevisiae (strain ATCC 204508 / S288c) (Baker's yeast)).